The chain runs to 128 residues: D-ribose pyranase (128 aa).

Catalysis depends on histidine 20, which acts as the Proton donor. Substrate contacts are provided by residues aspartate 28, histidine 95, and 117–119 (YSN).

The protein belongs to the RbsD / FucU family. RbsD subfamily. As to quaternary structure, homodecamer.

It is found in the cytoplasm. The catalysed reaction is beta-D-ribopyranose = beta-D-ribofuranose. The protein operates within carbohydrate metabolism; D-ribose degradation; D-ribose 5-phosphate from beta-D-ribopyranose: step 1/2. Functionally, catalyzes the interconversion of beta-pyran and beta-furan forms of D-ribose. The chain is D-ribose pyranase from Thermosipho africanus (strain TCF52B).